A 185-amino-acid chain; its full sequence is uncharacterized protein (185 aa).

The tract at residues 160–185 (QYTGPAVPSVPTTNLNDIGDPTKTVQ) is disordered.

This is an uncharacterized protein from Saccharomyces cerevisiae (strain ATCC 204508 / S288c) (Baker's yeast).